The sequence spans 837 residues: Protein translocase subunit SecA (837 aa).

ATP-binding positions include Gln87, 105-109, and Asp494; that span reads GEGKT. Residues 788 to 837 are disordered; sequence HKESKSDLEYSDSENTETKKKPKRRSEPKVGRNDPCPCGSGKKYKKCCGK. 4 residues coordinate Zn(2+): Cys823, Cys825, Cys834, and Cys835.

Belongs to the SecA family. In terms of assembly, monomer and homodimer. Part of the essential Sec protein translocation apparatus which comprises SecA, SecYEG and auxiliary proteins SecDF-YajC and YidC. Requires Zn(2+) as cofactor.

The protein localises to the cell inner membrane. Its subcellular location is the cytoplasm. The enzyme catalyses ATP + H2O + cellular proteinSide 1 = ADP + phosphate + cellular proteinSide 2.. Its function is as follows. Part of the Sec protein translocase complex. Interacts with the SecYEG preprotein conducting channel. Has a central role in coupling the hydrolysis of ATP to the transfer of proteins into and across the cell membrane, serving as an ATP-driven molecular motor driving the stepwise translocation of polypeptide chains across the membrane. In Maridesulfovibrio salexigens (strain ATCC 14822 / DSM 2638 / NCIMB 8403 / VKM B-1763) (Desulfovibrio salexigens), this protein is Protein translocase subunit SecA.